The primary structure comprises 199 residues: Prolactin (199 aa).

Residues cysteine 4 and cysteine 11 are joined by a disulfide bond. Serine 26 carries the phosphoserine modification. N-linked (GlcNAc...) asparagine; partial glycosylation is present at asparagine 31. Phosphoserine is present on residues serine 34 and serine 90. Intrachain disulfides connect cysteine 58–cysteine 174 and cysteine 191–cysteine 199.

Belongs to the somatotropin/prolactin family. Interacts with PRLR.

It localises to the secreted. Its function is as follows. Prolactin acts primarily on the mammary gland by promoting lactation. In Camelus dromedarius (Dromedary), this protein is Prolactin (PRL).